Consider the following 132-residue polypeptide: Small ribosomal subunit protein uS8c (132 aa).

Belongs to the universal ribosomal protein uS8 family. In terms of assembly, part of the 30S ribosomal subunit.

Its subcellular location is the plastid. The protein resides in the chloroplast. One of the primary rRNA binding proteins, it binds directly to 16S rRNA central domain where it helps coordinate assembly of the platform of the 30S subunit. This is Small ribosomal subunit protein uS8c (rps8) from Nymphaea alba (White water-lily).